The chain runs to 504 residues: Probable protein phosphatase 2C 18 (504 aa).

The disordered stretch occupies residues 1 to 49 (MGLCYSVDRTTGKEPGEASSTATTAETVEERSGSGRWRRPRDLKGGGDI). Positions 17-26 (EASSTATTAE) are enriched in low complexity. A PPM-type phosphatase domain is found at 67-399 (IACLYTQQGK…DDCTVVCLFL (333 aa)). The Mn(2+) site is built by Asp103, Gly104, Asp344, and Asp390. The interval 410 to 435 (TNVKKDSPKEESIESVTNSTSKEEDE) is disordered. Residues 412 to 421 (VKKDSPKEES) are compositionally biased toward basic and acidic residues.

It belongs to the PP2C family. Mg(2+) is required as a cofactor. Requires Mn(2+) as cofactor.

The enzyme catalyses O-phospho-L-seryl-[protein] + H2O = L-seryl-[protein] + phosphate. It carries out the reaction O-phospho-L-threonyl-[protein] + H2O = L-threonyl-[protein] + phosphate. The sequence is that of Probable protein phosphatase 2C 18 from Arabidopsis thaliana (Mouse-ear cress).